The following is a 166-amino-acid chain: Transcription antitermination protein NusB (166 aa).

Residues methionine 1–lysine 15 show a composition bias toward basic and acidic residues. The interval methionine 1–glutamate 30 is disordered.

This sequence belongs to the NusB family.

Involved in transcription antitermination. Required for transcription of ribosomal RNA (rRNA) genes. Binds specifically to the boxA antiterminator sequence of the ribosomal RNA (rrn) operons. The protein is Transcription antitermination protein NusB of Pseudomonas fluorescens (strain ATCC BAA-477 / NRRL B-23932 / Pf-5).